The following is a 369-amino-acid chain: Anhydro-N-acetylmuramic acid kinase (369 aa).

ATP is bound at residue G12–D19.

It belongs to the anhydro-N-acetylmuramic acid kinase family.

The enzyme catalyses 1,6-anhydro-N-acetyl-beta-muramate + ATP + H2O = N-acetyl-D-muramate 6-phosphate + ADP + H(+). It participates in amino-sugar metabolism; 1,6-anhydro-N-acetylmuramate degradation. The protein operates within cell wall biogenesis; peptidoglycan recycling. Catalyzes the specific phosphorylation of 1,6-anhydro-N-acetylmuramic acid (anhMurNAc) with the simultaneous cleavage of the 1,6-anhydro ring, generating MurNAc-6-P. Is required for the utilization of anhMurNAc either imported from the medium or derived from its own cell wall murein, and thus plays a role in cell wall recycling. This Shigella boydii serotype 18 (strain CDC 3083-94 / BS512) protein is Anhydro-N-acetylmuramic acid kinase.